A 184-amino-acid polypeptide reads, in one-letter code: Ras-related protein Rap-1b-like protein (184 aa).

A GTP-binding site is contributed by 10–18 (GSRGVGKSA). The Effector region signature appears at 32–40 (YDPTIEDSY). GTP-binding positions include 57–61 (DTAGT), 116–119 (NKCD), and 147–149 (SAK). A lipid anchor (S-geranylgeranyl cysteine) is attached at Cys181. Residues 182–184 (QLL) constitute a propeptide, removed in mature form.

The protein belongs to the small GTPase superfamily. Ras family.

The protein localises to the cell membrane. Its subcellular location is the cytoplasm. It is found in the cytosol. It carries out the reaction GTP + H2O = GDP + phosphate + H(+). Probable GTP-binding protein with intrinsic GTPase activity. This is Ras-related protein Rap-1b-like protein from Homo sapiens (Human).